Reading from the N-terminus, the 468-residue chain is Argininosuccinate lyase (468 aa).

The protein belongs to the lyase 1 family. Argininosuccinate lyase subfamily.

The protein localises to the cytoplasm. The catalysed reaction is 2-(N(omega)-L-arginino)succinate = fumarate + L-arginine. It functions in the pathway amino-acid biosynthesis; L-arginine biosynthesis; L-arginine from L-ornithine and carbamoyl phosphate: step 3/3. The polypeptide is Argininosuccinate lyase (Paraburkholderia xenovorans (strain LB400)).